The primary structure comprises 312 residues: uncharacterized protein (312 aa).

Active-site charge relay system residues include Ser-200, Asp-261, and His-292.

This sequence belongs to the AB hydrolase superfamily. AB hydrolase 2 family.

This is an uncharacterized protein from Acanthamoeba polyphaga mimivirus (APMV).